We begin with the raw amino-acid sequence, 463 residues long: NADH dehydrogenase [ubiquinone] iron-sulfur protein 2, mitochondrial (463 aa).

A mitochondrion-targeting transit peptide spans 1-33 (MAALRALCGFRGVAAQVLRPGAGVRLPIQPSRG). Residue lysine 62 is modified to N6-acetyllysine. At arginine 118 the chain carries Symmetric dimethylarginine. [4Fe-4S] cluster contacts are provided by cysteine 326, cysteine 332, and cysteine 347.

Belongs to the complex I 49 kDa subunit family. Core subunit of respiratory chain NADH dehydrogenase (Complex I) which is composed of 45 different subunits. Component of the iron-sulfur (IP) fragment of the enzyme. Interacts with NDUFAF3. Interacts with NDUFAF7. Interacts with CERS2. [4Fe-4S] cluster is required as a cofactor. Dimethylation at Arg-118 by NDUFAF7 takes place after NDUFS2 assembles into the complex I, leading to stabilize the early intermediate complex.

It localises to the mitochondrion inner membrane. The catalysed reaction is a ubiquinone + NADH + 5 H(+)(in) = a ubiquinol + NAD(+) + 4 H(+)(out). In terms of biological role, core subunit of the mitochondrial membrane respiratory chain NADH dehydrogenase (Complex I) which catalyzes electron transfer from NADH through the respiratory chain, using ubiquinone as an electron acceptor. Essential for the catalytic activity and assembly of complex I. Redox-sensitive, critical component of the oxygen-sensing pathway in the pulmonary vasculature which plays a key role in acute pulmonary oxygen-sensing and hypoxic pulmonary vasoconstriction. Plays an important role in carotid body sensing of hypoxia. Essential for glia-like neural stem and progenitor cell proliferation, differentiation and subsequent oligodendrocyte or neuronal maturation. The chain is NADH dehydrogenase [ubiquinone] iron-sulfur protein 2, mitochondrial (NDUFS2) from Pan troglodytes (Chimpanzee).